We begin with the raw amino-acid sequence, 156 residues long: SsrA-binding protein (156 aa).

Positions 135–150 (KRDTIKDREWQRDRSR) are enriched in basic and acidic residues. The interval 135–156 (KRDTIKDREWQRDRSRIMKKNT) is disordered.

It belongs to the SmpB family.

The protein localises to the cytoplasm. Functionally, required for rescue of stalled ribosomes mediated by trans-translation. Binds to transfer-messenger RNA (tmRNA), required for stable association of tmRNA with ribosomes. tmRNA and SmpB together mimic tRNA shape, replacing the anticodon stem-loop with SmpB. tmRNA is encoded by the ssrA gene; the 2 termini fold to resemble tRNA(Ala) and it encodes a 'tag peptide', a short internal open reading frame. During trans-translation Ala-aminoacylated tmRNA acts like a tRNA, entering the A-site of stalled ribosomes, displacing the stalled mRNA. The ribosome then switches to translate the ORF on the tmRNA; the nascent peptide is terminated with the 'tag peptide' encoded by the tmRNA and targeted for degradation. The ribosome is freed to recommence translation, which seems to be the essential function of trans-translation. This Legionella pneumophila (strain Paris) protein is SsrA-binding protein.